A 197-amino-acid chain; its full sequence is Probable UbiX-like flavin prenyltransferase (197 aa).

Residues Gly9–Thr11, Ser36, Ser87–Thr90, and Arg122 each bind FMN.

This sequence belongs to the UbiX/PAD1 family. YclB subfamily. As to quaternary structure, homododecamer.

It catalyses the reaction dimethylallyl phosphate + FMNH2 = prenylated FMNH2 + phosphate. Functionally, flavin prenyltransferase that catalyzes the synthesis of the prenylated FMN cofactor (prenyl-FMN) for phenolic acid decarboxylase C. Involved in the decarboxylation and detoxification of phenolic derivatives under both aerobic and anaerobic conditions. The protein is Probable UbiX-like flavin prenyltransferase (ecdB) of Escherichia coli O111:H-.